The chain runs to 658 residues: Biosynthetic arginine decarboxylase (658 aa).

K127 is subject to N6-(pyridoxal phosphate)lysine. Substrate is bound at residue 307–317 (FDVGGGLGVDY).

The protein belongs to the Orn/Lys/Arg decarboxylase class-II family. SpeA subfamily. Mg(2+) is required as a cofactor. The cofactor is pyridoxal 5'-phosphate.

It catalyses the reaction L-arginine + H(+) = agmatine + CO2. It functions in the pathway amine and polyamine biosynthesis; agmatine biosynthesis; agmatine from L-arginine: step 1/1. Its function is as follows. Catalyzes the biosynthesis of agmatine from arginine. The protein is Biosynthetic arginine decarboxylase of Salmonella typhi.